Here is a 449-residue protein sequence, read N- to C-terminus: Interferon-related developmental regulator 1 (449 aa).

A compositionally biased stretch (basic residues) spans 1–10; sequence MPKNKKRNAP. The disordered stretch occupies residues 1–42; the sequence is MPKNKKRNAPHRGGGGGGGSGAATSAATAGGPHRTVQPFSDE. The span at 12 to 21 shows a compositional bias: gly residues; it reads RGGGGGGGSG. Residues 22-31 show a composition bias toward low complexity; that stretch reads AATSAATAGG.

Belongs to the IFRD family. In terms of assembly, interacts with PSIP1/LEDGF.

In terms of biological role, could play a role in regulating gene activity in the proliferative and/or differentiative pathways induced by NGF. May be an autocrine factor that attenuates or amplifies the initial ligand-induced signal. This is Interferon-related developmental regulator 1 (Ifrd1) from Mus musculus (Mouse).